A 599-amino-acid polypeptide reads, in one-letter code: MCYAVGGCAGAGPAATYVAAALQFFAASQCLLQESYPRQAHVTNGSRYDFIVVGGGTAGSALAARLAEENRFSVLLLEAGPNPPEESIVPGLRQTLKETPYDWNFTTIDDGVTSQALASHVQRQPRGKMLGGSGSLNDMVYARGHPEDYYEWADIAGDVWNWTNVLDYFKRTEHMTDSNIIRNKELMQYHGIGGAIEVSGAHYPDSPNSKLMQAFQELGFAAVDDMTYPYKIGVGKFSHTIRGGRRDSSLTAMLNKVKSGKLHVLKNTFATKILFEGNKAVGIQADSDGRNLFVYAKHEVIVSAGTFNTPKLLLLSGVGPSDILNQFDIDVVQDLPVGQGLQDHVMVLNFMTAERGTCKLSESDGYFNVIKYLYNGSGTLSYSDSIGAYLPQKDKEAHVPYFAIYPSCVPAGQLTSNLCVQGIGFTSEICEKLQKENEMHELIVAAVVLLKPQSRGHVTLKSLNPDDDPAIYSGTFDHEADMEGFPEAIEKAISLVNTTHFKKLGARVVDLTPESCRGLQEPQRTRCSVRALALAAWHAVGTARLGAVLDAELRVRGLEGLRVADASVMPTMVRGNTNAPVVMIAEMAADFIKNQYRDK.

FAD-binding positions include 137 to 140 (NDMV) and 537 to 538 (WH). His538 functions as the Proton acceptor in the catalytic mechanism.

Belongs to the GMC oxidoreductase family. Requires FAD as cofactor.

It catalyses the reaction ecdysone + O2 = 3-dehydroecdysone + H2O2. Involved in the inactivation of ecdysteroid molting hormones by converting ecdysteroids into 3-dehydroecdysteroids. The chain is Ecdysone oxidase from Spodoptera littoralis (Egyptian cotton leafworm).